The sequence spans 79 residues: Small ribosomal subunit protein bS18 (79 aa).

Belongs to the bacterial ribosomal protein bS18 family. Part of the 30S ribosomal subunit. Forms a tight heterodimer with protein bS6.

Its function is as follows. Binds as a heterodimer with protein bS6 to the central domain of the 16S rRNA, where it helps stabilize the platform of the 30S subunit. In Onion yellows phytoplasma (strain OY-M), this protein is Small ribosomal subunit protein bS18.